Here is a 592-residue protein sequence, read N- to C-terminus: Aspartate--tRNA(Asp/Asn) ligase (592 aa).

Glu172 is an L-aspartate binding site. The interval 196–199 (QLFK) is aspartate. Position 218 (Arg218) interacts with L-aspartate. Residues 218–220 (RDE) and Gln227 each bind ATP. An L-aspartate-binding site is contributed by His442. Glu476 contributes to the ATP binding site. Residue Arg483 coordinates L-aspartate. 528 to 531 (GWDR) lines the ATP pocket. The segment at 553 to 592 (SGTDPLTGAPTPITPEQRKEAGIDADPYAAAGRPPGRQSA) is disordered.

Belongs to the class-II aminoacyl-tRNA synthetase family. Type 1 subfamily. As to quaternary structure, homodimer.

Its subcellular location is the cytoplasm. It catalyses the reaction tRNA(Asx) + L-aspartate + ATP = L-aspartyl-tRNA(Asx) + AMP + diphosphate. In terms of biological role, aspartyl-tRNA synthetase with relaxed tRNA specificity since it is able to aspartylate not only its cognate tRNA(Asp) but also tRNA(Asn). Reaction proceeds in two steps: L-aspartate is first activated by ATP to form Asp-AMP and then transferred to the acceptor end of tRNA(Asp/Asn). The polypeptide is Aspartate--tRNA(Asp/Asn) ligase (Acidothermus cellulolyticus (strain ATCC 43068 / DSM 8971 / 11B)).